A 484-amino-acid polypeptide reads, in one-letter code: RuvB-like helicase 1 (484 aa).

Residues 1-11 (MSMAASSSTAT) show a composition bias toward low complexity. The disordered stretch occupies residues 1-27 (MSMAASSSTATVQPSGIITQPPPPSTL). Residue 87 to 94 (GPPGTGKT) participates in ATP binding.

It belongs to the RuvB family. As to quaternary structure, may form heterododecamers with RVB2. Component of the SWR1 chromatin remodeling complex, the INO80 chromatin remodeling complex, and of the R2TP complex.

It localises to the nucleus. The catalysed reaction is ATP + H2O = ADP + phosphate + H(+). Functionally, DNA helicase which participates in several chromatin remodeling complexes, including the SWR1 and the INO80 complexes. The SWR1 complex mediates the ATP-dependent exchange of histone H2A for the H2A variant HZT1 leading to transcriptional regulation of selected genes by chromatin remodeling. The INO80 complex remodels chromatin by shifting nucleosomes and is involved in DNA repair. Also involved in pre-rRNA processing. The chain is RuvB-like helicase 1 (RVB1) from Cryptococcus neoformans var. neoformans serotype D (strain B-3501A) (Filobasidiella neoformans).